Reading from the N-terminus, the 661-residue chain is UvrABC system protein B (661 aa).

The Helicase ATP-binding domain occupies 24–209; it reads NGLNKGYRFQ…IFPSYQDEGI (186 aa). Residue 37–44 participates in ATP binding; it reads GVTGSGKT. Positions 90-113 match the Beta-hairpin motif; that stretch reads YYDYYQPEAYVPTKDLYIEKSADI. The 165-residue stretch at 430–594 folds into the Helicase C-terminal domain; it reads DLVNEIVQVK…IIKPLMEDIF (165 aa). The UVR domain occupies 622–657; that stretch reads EEYAALLEEEMYKAASELRYEDAARLRDELFKIKEE.

Belongs to the UvrB family. In terms of assembly, forms a heterotetramer with UvrA during the search for lesions. Interacts with UvrC in an incision complex.

The protein resides in the cytoplasm. Its function is as follows. The UvrABC repair system catalyzes the recognition and processing of DNA lesions. A damage recognition complex composed of 2 UvrA and 2 UvrB subunits scans DNA for abnormalities. Upon binding of the UvrA(2)B(2) complex to a putative damaged site, the DNA wraps around one UvrB monomer. DNA wrap is dependent on ATP binding by UvrB and probably causes local melting of the DNA helix, facilitating insertion of UvrB beta-hairpin between the DNA strands. Then UvrB probes one DNA strand for the presence of a lesion. If a lesion is found the UvrA subunits dissociate and the UvrB-DNA preincision complex is formed. This complex is subsequently bound by UvrC and the second UvrB is released. If no lesion is found, the DNA wraps around the other UvrB subunit that will check the other stand for damage. The chain is UvrABC system protein B from Fervidobacterium nodosum (strain ATCC 35602 / DSM 5306 / Rt17-B1).